Here is a 373-residue protein sequence, read N- to C-terminus: tRNA-specific 2-thiouridylase MnmA (373 aa).

ATP-binding positions include 18-25 (AMSGGVDS) and L44. C117 (nucleophile) is an active-site residue. C117 and C214 are disulfide-bonded. Residue G141 participates in ATP binding. The interaction with tRNA stretch occupies residues 163–165 (RDQ). C214 acts as the Cysteine persulfide intermediate in catalysis.

The protein belongs to the MnmA/TRMU family.

The protein localises to the cytoplasm. The catalysed reaction is S-sulfanyl-L-cysteinyl-[protein] + uridine(34) in tRNA + AH2 + ATP = 2-thiouridine(34) in tRNA + L-cysteinyl-[protein] + A + AMP + diphosphate + H(+). Functionally, catalyzes the 2-thiolation of uridine at the wobble position (U34) of tRNA, leading to the formation of s(2)U34. In Paramagnetospirillum magneticum (strain ATCC 700264 / AMB-1) (Magnetospirillum magneticum), this protein is tRNA-specific 2-thiouridylase MnmA.